The primary structure comprises 224 residues: Peptide deformylase 3 (224 aa).

2 residues coordinate Fe cation: Cys-135 and His-177. Residue Glu-178 is part of the active site. His-181 lines the Fe cation pocket.

It belongs to the polypeptide deformylase family. It depends on Fe(2+) as a cofactor.

The enzyme catalyses N-terminal N-formyl-L-methionyl-[peptide] + H2O = N-terminal L-methionyl-[peptide] + formate. In terms of biological role, removes the formyl group from the N-terminal Met of newly synthesized proteins. Requires at least a dipeptide for an efficient rate of reaction. N-terminal L-methionine is a prerequisite for activity but the enzyme has broad specificity at other positions. The chain is Peptide deformylase 3 from Streptomyces avermitilis (strain ATCC 31267 / DSM 46492 / JCM 5070 / NBRC 14893 / NCIMB 12804 / NRRL 8165 / MA-4680).